The primary structure comprises 355 residues: tRNA (guanine-N(1)-)-methyltransferase (355 aa).

S-adenosyl-L-methionine is bound by residues Gly109 and 129–134; that span reads IGDYVL.

Belongs to the RNA methyltransferase TrmD family. As to quaternary structure, homodimer.

The protein localises to the cytoplasm. The catalysed reaction is guanosine(37) in tRNA + S-adenosyl-L-methionine = N(1)-methylguanosine(37) in tRNA + S-adenosyl-L-homocysteine + H(+). In terms of biological role, specifically methylates guanosine-37 in various tRNAs. This Chlamydia abortus (strain DSM 27085 / S26/3) (Chlamydophila abortus) protein is tRNA (guanine-N(1)-)-methyltransferase.